A 95-amino-acid chain; its full sequence is Auxin-responsive protein SAUR27 (95 aa).

Belongs to the ARG7 family. In terms of assembly, interacts with PP2C-D1. In terms of tissue distribution, higher expression in thermo-responsive cultivars (e.g. cv. Alst-1, cv. Ang-0 and cv. Com-0) than in low thermo-responsive cultivars (e.g. cv. Dja-1, cv. El-0 and cv. Kon).

It is found in the cell membrane. Functionally, functions as a positive effector of cell expansion through modulation of auxin transport. Involved in thermo-responsiveness of plant architecture. Enhances plasma membrane H(+)-ATPase. The protein is Auxin-responsive protein SAUR27 of Arabidopsis thaliana (Mouse-ear cress).